The primary structure comprises 883 residues: Ankyrin repeat and SAM domain-containing protein 6 (883 aa).

ANK repeat units lie at residues 8 to 37 (PGLQ…DPVA), 68 to 97 (AGNS…SVNS), 101 to 130 (YGWS…DVNA), 134 to 163 (LGAS…IVDH), 181 to 210 (LGIT…DPNH), 215 to 244 (VGWS…NPDH), 282 to 312 (KRRP…HVNL), 316 to 345 (DGAT…DMDK), 350 to 379 (HGWT…DVAL), and 383 to 414 (NGYT…QVNK). Positions 30–50 (EPGADPVAGPEAGAEPAGPEA) are disordered. Disordered stretches follow at residues 414 to 439 (KDRG…IPVL), 490 to 522 (MRAP…RREK), 566 to 773 (SHTC…ITDE), and 852 to 883 (SFES…SSRR). The segment covering 566–576 (SHTCHNGKADP) has biased composition (basic and acidic residues). A compositionally biased stretch (low complexity) spans 607 to 630 (PSISRSPASPASSGSFNHSPHSSG). Positions 631 to 640 (GASGIGGMSR) are enriched in gly residues. S649 carries the phosphoserine modification. The span at 649–661 (SGGSVDSVLSQIA) shows a compositional bias: polar residues. Low complexity-rich tracts occupy residues 687–711 (SSSP…PSSS) and 720–737 (PPSG…TLTP). 2 positions are modified to phosphoserine: S732 and S740. The span at 748–768 (SSVSSSSSHRQSKSSGGSSSG) shows a compositional bias: low complexity. The SAM domain occupies 771–834 (TDEDELTGIL…LAAISELNAG (64 aa)). The segment covering 852 to 862 (SFESSASNTRA) has biased composition (polar residues). Residues 874 to 883 (RPEETVSSRR) are compositionally biased toward basic and acidic residues.

As to quaternary structure, homooligomer. Interacts with NEK8. Central component of a complex containing at least ANKS6, INVS, NEK8 and NPHP3. ANKS6 may organize complex assembly by linking INVS and NPHP3 to NEK8 and INVS may target the complex to the proximal ciliary axoneme. Interacts (via SAM domain) with BICC1 (via KH domains) in an RNA-dependent manner. Interacts (via SAM domain) with ANKS3 (via SAM domain). In terms of processing, hydroxylated at Asn-129, most probably by HIF1AN. This hydroxylation results in decreased NEK8-binding. As to expression, expressed in kidney (at protein level).

It is found in the cell projection. The protein resides in the cilium. The protein localises to the cytoplasm. Functionally, required for renal function. This Mus musculus (Mouse) protein is Ankyrin repeat and SAM domain-containing protein 6 (Anks6).